We begin with the raw amino-acid sequence, 80 residues long: Secreted transmembrane peptide 3 (80 aa).

The first 27 residues, 1–27, serve as a signal peptide directing secretion; the sequence is MGLKMSSNALLLSLFLLLLCLFSEIGG. Residues 44 to 80 form a disordered region; that stretch reads IATPPSLTCGGQRLGGPQPRLSPCPRPRPRPRPRTGS. An SCOOP motif motif is present at residues 62-80; that stretch reads PRLSPCPRPRPRPRPRTGS. A compositionally biased stretch (basic residues) spans 70–80; it reads PRPRPRPRTGS.

This sequence belongs to the serine rich endogenous peptide (SCOOP) phytocytokine family. Interacts with MIK2 (via extracellular leucine-rich repeat domain); this interaction triggers the formation of complex between MIK2 and the BAK1/SERK3 and SERK4 coreceptors, and subsequent BAK1 activation by phosphorylation. Mostly expressed in leaves, and, to a lower extent, in roots, stems, siliques, seeds and flowers.

The protein resides in the cell membrane. The protein localises to the secreted. Its subcellular location is the extracellular space. It is found in the apoplast. It localises to the endoplasmic reticulum. The protein resides in the golgi apparatus. Brassicaceae-specific phytocytokine (plant endogenous peptide released into the apoplast) perceived by MIK2 in a BAK1/SERK3 and SERK4 coreceptors-dependent manner, that modulates various physiological and antimicrobial processes including growth prevention and reactive oxygen species (ROS) response regulation. In Arabidopsis thaliana (Mouse-ear cress), this protein is Secreted transmembrane peptide 3.